Consider the following 62-residue polypeptide: Photosystem II reaction center protein Z (62 aa).

2 helical membrane passes run 8-28 (LVFILVIFSTLLVVGIPVTFA) and 41-61 (YTGAGIWTGLVLITGLVNSFI).

Belongs to the PsbZ family. As to quaternary structure, PSII is composed of 1 copy each of membrane proteins PsbA, PsbB, PsbC, PsbD, PsbE, PsbF, PsbH, PsbI, PsbJ, PsbK, PsbL, PsbM, PsbT, sbX, PsbY, PsbZ, Psb30/Ycf12, at least 3 peripheral proteins of the oxygen-evolving complex and a large number of cofactors. It forms dimeric complexes.

Its subcellular location is the plastid. The protein localises to the chloroplast thylakoid membrane. Its function is as follows. May control the interaction of photosystem II (PSII) cores with the light-harvesting antenna, regulates electron flow through the 2 photosystem reaction centers. PSII is a light-driven water plastoquinone oxidoreductase, using light energy to abstract electrons from H(2)O, generating a proton gradient subsequently used for ATP formation. This Gracilaria tenuistipitata var. liui (Red alga) protein is Photosystem II reaction center protein Z.